We begin with the raw amino-acid sequence, 189 residues long: High affinity copper uptake protein 1 (189 aa).

Residues 1 to 67 (MDHSAHMGMS…AGLVINTAGE (67 aa)) lie on the Extracellular side of the membrane. The Methionine segments (Mets) motif signature appears at 13–18 (MGMSDM). Residues 15–36 (MSDMNHSTTMPPSHHHPTSSGS) are disordered. Residues 20–36 (HSTTMPPSHHHPTSSGS) show a composition bias toward low complexity. Residues 68-88 (MAGAFVAVFLLAMFYEGLKIA) traverse the membrane as a helical segment. The Cytoplasmic segment spans residues 89–131 (REGLLRKSQVSIRYNSMPVPGPNGTILMETHKTVGQQMLSFPH). A Phosphothreonine modification is found at threonine 113. A helical transmembrane segment spans residues 132 to 152 (LLQTVLHIIQVVISYFLMLIF). Topologically, residues 153 to 155 (MTY) are extracellular. A helical membrane pass occupies residues 156–176 (NGYLCIAVAAGAGTGYFLFSW). Residues 177 to 189 (KKAVVVDITEHCH) lie on the Cytoplasmic side of the membrane. Cysteine 188 carries the post-translational modification Cysteine sulfenic acid (-SOH).

The protein belongs to the copper transporter (Ctr) (TC 1.A.56) family. SLC31A subfamily. As to quaternary structure, homotrimer; is stabilized by cisplatin via interactions between cisplatin and the methionine-rich clusters, and could be crucial for the copper(2+) reduction process and copper(1+) stabilization. Heterotrimer between SLC31A1, CCS and SOD1; this heterotrimer is copper(1+)-mediated and its maintenance is regulated through SOD1 activation. Interacts with KDR; this interaction is induced upon VEGFA stimulation leading to SLC31A1 and KDR subsequent co-internalization to early endosomes, thereby activating KDR downstream signaling in endothelial cells. Interacts (via C-terminal domain) with ATOX1 (via dimer form); this interaction improves ATOX1 stability and controls intracellular copper(1+) levels. Interacts with SLC31A2; this interaction stabilizes SLC31A2 and protects its from ubiquitination and degradation. Interacts (via C-terminal domain) with CCS; this interaction is copper(1+)-mediated. In terms of processing, proteolytic cleavage, leading to a truncated form, is facilitated by SLC31A2 and initiated preferentially by CTSL and to a minor extend by CTSB in endolysosomal compartments. A post-CTSL/cathepsin L processing occurs to yield to the fully truncated form. Post-translationally, sulfenylated at Cys-188 after stimulation with VEGFA, which induces SLC31A1-KDR disulfide bond formation and their co-internalization to early endosomes, driving to a sustained VEGFR2 signaling.

Its subcellular location is the cell membrane. The protein localises to the early endosome membrane. It is found in the recycling endosome membrane. The protein resides in the apical cell membrane. It localises to the late endosome membrane. Its subcellular location is the basolateral cell membrane. The enzyme catalyses Ag(+)(out) = Ag(+)(in). The catalysed reaction is Cu(+)(out) = Cu(+)(in). In terms of biological role, uniporter that mediates the transport of copper(1+) from the extracellular space to the cytoplasm, across the plasma membrane and delivers directly copper(1+) to specific chaperone such as ATOX1, via a copper(1+)- mediated transient interaction between the C-terminal domain and a copper(1+) chaperone, thus controlling intracellular copper(1+) levels. May function in copper(1+) import from the apical membrane thus may drive intestinal copper absorption. The copper(1+) transport mechanism is sodium-independent, saturable and of high-affinity. Also mediates the uptake of silver(1+). May function in the influx of the platinum-containing chemotherapeutic agents. The platinum-containing chemotherapeutic agents uptake is saturable. In vitro, mediates the transport of cadmium(2+) into cells. Also participates in the first step of copper(2+) acquisition by cells through a direct transfer of copper(2+) from copper(2+) carriers in blood, such as ALB to the N-terminal domain of SLC31A1, leading to copper(2+) reduction and probably followed by copper(1+) stabilization. In addition, functions as a redox sensor to promote angiogenesis in endothelial cells, in a copper(1+) transport independent manner, by transmitting the VEGF-induced ROS signal through a sulfenylation at Cys-189 leadin g to a subsequent disulfide bond formation between SLC31A1 and KDR. The SLC31A1-KDR complex is then co-internalized to early endosomes, driving a sustained VEGFR2 signaling. Functionally, mobilizes copper(1+) out of the endosomal compartment, making copper(1+) available for export out of the cells. The chain is High affinity copper uptake protein 1 from Sus scrofa (Pig).